Here is a 270-residue protein sequence, read N- to C-terminus: Bis(5'-nucleosyl)-tetraphosphatase, symmetrical (270 aa).

Belongs to the Ap4A hydrolase family.

It carries out the reaction P(1),P(4)-bis(5'-adenosyl) tetraphosphate + H2O = 2 ADP + 2 H(+). In terms of biological role, hydrolyzes diadenosine 5',5'''-P1,P4-tetraphosphate to yield ADP. This is Bis(5'-nucleosyl)-tetraphosphatase, symmetrical from Actinobacillus pleuropneumoniae serotype 3 (strain JL03).